Consider the following 146-residue polypeptide: Hemoglobin subunit beta (146 aa).

In terms of domain architecture, Globin spans 2 to 146 (QWTAEEKQLI…VAHALARKYH (145 aa)). His-63 and His-92 together coordinate heme b.

The protein belongs to the globin family. Heterotetramer of two alpha chains and two beta chains. Red blood cells.

Its function is as follows. Involved in oxygen transport from the lung to the various peripheral tissues. This Sturnus vulgaris (Starling) protein is Hemoglobin subunit beta (HBB).